A 67-amino-acid chain; its full sequence is Conotoxin Cl14c (67 aa).

Residues 1 to 20 form the signal peptide; sequence MNVTVMFLVLLLLTMPLTDG. Residues 21–48 constitute a propeptide that is removed on maturation; sequence FNIRATNGGELFGPVQRDAGNVLDHGFQ.

It belongs to the conotoxin L superfamily. Contains 2 disulfide bonds. In terms of tissue distribution, expressed by the venom duct.

It is found in the secreted. The sequence is that of Conotoxin Cl14c from Californiconus californicus (California cone).